The chain runs to 215 residues: Urease accessory protein UreE (215 aa).

The segment at 134 to 215 (FDPEGGAYAP…HGHSHKHDHK (82 aa)) is disordered. Positions 164 to 206 (GHHDHADHEHDHKHDHGKHDHAGHDHAHDHHVHDEHCGHDHGH) are enriched in basic and acidic residues.

It belongs to the UreE family.

The protein resides in the cytoplasm. Involved in urease metallocenter assembly. Binds nickel. Probably functions as a nickel donor during metallocenter assembly. The chain is Urease accessory protein UreE from Rhodopseudomonas palustris (strain HaA2).